A 476-amino-acid chain; its full sequence is Proline--tRNA ligase 2 (476 aa).

It belongs to the class-II aminoacyl-tRNA synthetase family. ProS type 3 subfamily. In terms of assembly, homodimer.

The protein resides in the cytoplasm. It catalyses the reaction tRNA(Pro) + L-proline + ATP = L-prolyl-tRNA(Pro) + AMP + diphosphate. Functionally, catalyzes the attachment of proline to tRNA(Pro) in a two-step reaction: proline is first activated by ATP to form Pro-AMP and then transferred to the acceptor end of tRNA(Pro). The protein is Proline--tRNA ligase 2 of Bacillus cereus (strain ZK / E33L).